Here is a 705-residue protein sequence, read N- to C-terminus: 1,4-alpha-glucan branching enzyme GlgB (705 aa).

Catalysis depends on D309, which acts as the Nucleophile. The Proton donor role is filled by E360. A disordered region spans residues 654–705; it reads VQVERAADPRPNEQQRLVAETPAHEGGRSAPADAAESAEQKPDDEQKGGKKA. Positions 691-705 are enriched in basic and acidic residues; sequence AEQKPDDEQKGGKKA.

Belongs to the glycosyl hydrolase 13 family. GlgB subfamily. In terms of assembly, monomer.

The catalysed reaction is Transfers a segment of a (1-&gt;4)-alpha-D-glucan chain to a primary hydroxy group in a similar glucan chain.. The protein operates within glycan biosynthesis; glycogen biosynthesis. In terms of biological role, catalyzes the formation of the alpha-1,6-glucosidic linkages in glycogen by scission of a 1,4-alpha-linked oligosaccharide from growing alpha-1,4-glucan chains and the subsequent attachment of the oligosaccharide to the alpha-1,6 position. This Deinococcus radiodurans (strain ATCC 13939 / DSM 20539 / JCM 16871 / CCUG 27074 / LMG 4051 / NBRC 15346 / NCIMB 9279 / VKM B-1422 / R1) protein is 1,4-alpha-glucan branching enzyme GlgB.